Consider the following 236-residue polypeptide: uncharacterized protein (236 aa).

The protein resides in the plastid. It is found in the chloroplast. This is an uncharacterized protein from Chlorella vulgaris (Green alga).